We begin with the raw amino-acid sequence, 67 residues long: Small ribosomal subunit protein eS17 (67 aa).

It belongs to the eukaryotic ribosomal protein eS17 family.

This chain is Small ribosomal subunit protein eS17, found in Thermococcus sibiricus (strain DSM 12597 / MM 739).